A 152-amino-acid chain; its full sequence is Serglycin (152 aa).

The N-terminal stretch at 1-25 (MQVPVGSRLVLALAFVLVWGSSVQG) is a signal peptide. The propeptide at 26–74 (YPARRARYQWVRCKPNGFFANCIEEKGPQFDLIDESNNIGPPMNNPVLM) is activation peptide. An intrachain disulfide couples cysteine 38 to cysteine 47. The segment at 66–115 (PPMNNPVLMEGPSKDFISNYDDYGSGSGSGSGSGSGSGSGSGSGFLGDME) is disordered. Repeat copies occupy residues 89 to 90 (GS), 91 to 92 (GS), 93 to 94 (GS), 95 to 96 (GS), 97 to 98 (GS), 99 to 100 (GS), 101 to 102 (GS), 103 to 104 (GS), 105 to 106 (GS), and 107 to 108 (GS). The tract at residues 89–108 (GSGSGSGSGSGSGSGSGSGS) is 10 X 2 AA tandem repeats of G-S. Residues 90–110 (SGSGSGSGSGSGSGSGSGSGF) are compositionally biased toward gly residues. 2 O-linked (Xyl...) (glycosaminoglycan) serine glycosylation sites follow: serine 92 and serine 94. 6 O-linked (Xyl...) (glycosaminoglycan) serine glycosylation sites follow: serine 98, serine 100, serine 102, serine 104, serine 106, and serine 108.

Belongs to the serglycin family. As to quaternary structure, binds to activated CD44 and to GZMB. O-glycosylated; contains chondroitin sulfate and heparan sulfate.

The protein resides in the cytoplasmic granule. It localises to the cytolytic granule. The protein localises to the secreted. Its subcellular location is the extracellular space. It is found in the golgi apparatus. Functionally, plays a role in formation of mast cell secretory granules and mediates storage of various compounds in secretory vesicles. Required for storage of some proteases in both connective tissue and mucosal mast cells and for storage of granzyme B in T-lymphocytes. Plays a role in localizing neutrophil elastase in azurophil granules of neutrophils. Mediates processing of MMP2. Plays a role in cytotoxic cell granule-mediated apoptosis by forming a complex with granzyme B which is delivered to cells by perforin to induce apoptosis. Regulates the secretion of TNF-alpha and may also regulate protease secretion. Inhibits bone mineralization. The polypeptide is Serglycin (Srgn) (Mus musculus (Mouse)).